A 96-amino-acid polypeptide reads, in one-letter code: uncharacterized protein (96 aa).

It is found in the mitochondrion. This is an uncharacterized protein from Saccharomyces cerevisiae (strain ATCC 204508 / S288c) (Baker's yeast).